We begin with the raw amino-acid sequence, 408 residues long: MKDVLERFLGYIKVDTQSSEESDTVPTTKTQLEFAKKLGEELKAIGLKDVSVDESGYVMATLESNIDKKVPAIGFIAHMDTSPDLSGTNINPRIVEKYDGQDIVLNKEKNIVLKINEFPEILEYKGQDIVVTDGNTLLGADDKAGIAEIITAMEYLINHPEIKHGTIKVGFTPDEEVGKGADHFDVKKFGADLAYTLDGGGIGELECETFNAAKAKVIIEGRNVHPGSAKNKMTNAVLVANKFINMLPENEVPERTEGYEGFFHLLSVKSEVETAELNYIIRDFDRKKFEERKEQIKEVGKKINEEYNKEIVCVKVEDQYYNMKEKIDEVKYVVDIAYDAMKAIDIEPILVPIRGGTDGSRLSFMGLPTPNLFAGGHNFHGRFEFVPVLSMEKAAELVVKIAELYANR.

Position 78 (His-78) interacts with Zn(2+). Asp-80 is a catalytic residue. Asp-141 contributes to the Zn(2+) binding site. Glu-175 serves as the catalytic Proton acceptor. Zn(2+)-binding residues include Glu-176, Asp-198, and His-380.

It belongs to the peptidase M20B family. It depends on Zn(2+) as a cofactor.

Its subcellular location is the cytoplasm. It carries out the reaction Release of the N-terminal residue from a tripeptide.. Functionally, cleaves the N-terminal amino acid of tripeptides. The polypeptide is Peptidase T (Clostridium botulinum (strain Langeland / NCTC 10281 / Type F)).